The following is a 178-amino-acid chain: Interleukin-10 (178 aa).

An N-terminal signal peptide occupies residues M1–A18. 2 disulfides stabilise this stretch: C30-C126 and C80-C132. N-linked (GlcNAc...) asparagine glycosylation is present at N134.

This sequence belongs to the IL-10 family. In terms of assembly, homodimer. Interacts with IL10RA and IL10RB.

The protein localises to the secreted. In terms of biological role, major immune regulatory cytokine that acts on many cells of the immune system where it has profound anti-inflammatory functions, limiting excessive tissue disruption caused by inflammation. Mechanistically, IL10 binds to its heterotetrameric receptor comprising IL10RA and IL10RB leading to JAK1 and STAT2-mediated phosphorylation of STAT3. In turn, STAT3 translocates to the nucleus where it drives expression of anti-inflammatory mediators. Targets antigen-presenting cells (APCs) such as macrophages and monocytes and inhibits their release of pro-inflammatory cytokines including granulocyte-macrophage colony-stimulating factor /GM-CSF, granulocyte colony-stimulating factor/G-CSF, IL-1 alpha, IL-1 beta, IL-6, IL-8 and TNF-alpha. Also interferes with antigen presentation by reducing the expression of MHC-class II and co-stimulatory molecules, thereby inhibiting their ability to induce T cell activation. In addition, controls the inflammatory response of macrophages by reprogramming essential metabolic pathways including mTOR signaling. This Callithrix jacchus (White-tufted-ear marmoset) protein is Interleukin-10 (IL10).